A 532-amino-acid chain; its full sequence is MSIPHIAPVPHPRDGYYATNNPYQVNGPKGFTEFKYLEETHDLFVRLDFPGIQKESVIILLEPSKKAVIVTGEAPKESKHDSSHRKYGTATGLICDCCEISNIQCFVGDGVVRLILSKQKINLRVPIFCSCKITNLQNVLFFCLIFVGGARMPTDASPNIIRGYNPEDLSVELLLETSLRCFSIVNVSDIFHGFVLLIPIVAVAGGHPLAHLRGLNPEGCRGTDPFDPAFTGPTIRPHPSVLEGSTSAYETKQLSNGGLYLRIDMPGVPSDGFIVAVDGNGVVTIMGRAPATMHDSNGFYAMNNPYQANGPKGFAEFNQERDCGYPLTLLEPSKKAVTVTGDAAKSSKHDASNRNNNIHTFVEDGVVRLILSKKKIYPHAPNFCSFGGATIPTGDAPVADGTPYVNLLAHFRGLIPKGRRCTDPGDPAFTGPVVLPHPSVLEGPMMPYETKQLSNGGLYMRVDMPGVPSEKFMVAVDGDGVVTIMGRAPVTMHDTSGRTYVAKVANVPRGYDGGRIKLVPKHGVIRLTIPSN.

2 sHSP domains span residues 25–134 and 439–532; these read VNGP…CKIT and SVLE…IPSN.

Belongs to the small heat shock protein (HSP20) family.

This chain is Putative 57 kDa heat shock protein, found in Arabidopsis thaliana (Mouse-ear cress).